The following is a 187-amino-acid chain: Protein TfaD (187 aa).

The protein in the C-terminal section; belongs to the tfa family.

The chain is Protein TfaD (tfaD) from Escherichia coli (strain K12).